The chain runs to 679 residues: Protein hook (679 aa).

A Calponin-homology (CH) domain is found at 6-123 (NEMYYSLLEW…RLLQLVLGCA (118 aa)). Coiled coils occupy residues 135 to 437 (EIMC…LKCG) and 480 to 574 (QTAL…QEIL).

This sequence belongs to the hook family. In terms of assembly, homodimer. Interacts with microtubules via its N-terminus.

The protein localises to the cytoplasm. Its subcellular location is the cytoskeleton. It is found in the endosome. It localises to the synapse. Its function is as follows. Involved in endocytic trafficking by stabilizing organelles of the endocytic pathway. Probably acts as a cytoskeletal linker protein required to tether endosome vesicles to the cytoskeleton. Involved in modulation of endocytosis at stages required for down-regulation of membrane proteins that control synapse size. Not involved in synaptic vesicle recycling. Required in R7 cells for boss endocytosis into multivesicular bodies (MVBs). Has a role in regulating adult longevity. This Drosophila sechellia (Fruit fly) protein is Protein hook.